The following is a 692-amino-acid chain: Formate hydrogenlyase transcriptional activator (692 aa).

Residues Asp202–Val344 form the GAF domain. The 230-residue stretch at Ile381 to Leu610 folds into the Sigma-54 factor interaction domain. ATP contacts are provided by residues Gly409 to Glu416 and Ala472 to Glu481. A DNA-binding region (H-T-H motif) is located at residues Pro663 to Lys682.

Its function is as follows. Required for induction of expression of the formate dehydrogenase H and hydrogenase-3 structural genes. This is Formate hydrogenlyase transcriptional activator (fhlA) from Salmonella typhimurium (strain LT2 / SGSC1412 / ATCC 700720).